Here is a 173-residue protein sequence, read N- to C-terminus: Putative phosphoesterase GWCH70_0799 (173 aa).

His34 serves as the catalytic Proton donor. 2 consecutive short sequence motifs (HXTX) follow at residues 34 to 37 and 115 to 118; these read HLTL and HITI. His115 functions as the Proton acceptor in the catalytic mechanism.

This sequence belongs to the 2H phosphoesterase superfamily. YjcG family.

This chain is Putative phosphoesterase GWCH70_0799, found in Geobacillus sp. (strain WCH70).